The following is a 460-amino-acid chain: Argininosuccinate lyase (460 aa).

It belongs to the lyase 1 family. Argininosuccinate lyase subfamily.

Its subcellular location is the cytoplasm. It catalyses the reaction 2-(N(omega)-L-arginino)succinate = fumarate + L-arginine. It participates in amino-acid biosynthesis; L-arginine biosynthesis; L-arginine from L-ornithine and carbamoyl phosphate: step 3/3. The protein is Argininosuccinate lyase of Lacticaseibacillus paracasei (strain ATCC 334 / BCRC 17002 / CCUG 31169 / CIP 107868 / KCTC 3260 / NRRL B-441) (Lactobacillus paracasei).